A 51-amino-acid polypeptide reads, in one-letter code: Large ribosomal subunit protein bL32c (51 aa).

This sequence belongs to the bacterial ribosomal protein bL32 family.

The protein resides in the plastid. It localises to the chloroplast. The polypeptide is Large ribosomal subunit protein bL32c (Oenothera elata subsp. hookeri (Hooker's evening primrose)).